A 367-amino-acid polypeptide reads, in one-letter code: Probable 7-methylxanthine methyltransferase 2 (367 aa).

Residue Tyr-20 coordinates S-adenosyl-L-homocysteine. Position 27 (Thr-27) interacts with theobromine. S-adenosyl-L-homocysteine contacts are provided by Cys-64, Gln-69, Asp-101, Leu-102, Ser-134, and Phe-135. Theobromine-binding residues include Tyr-152, His-155, and Trp-156. Residues Asn-172, Asp-258, Phe-260, and Asn-261 each coordinate Mg(2+). Residue Phe-313 participates in theobromine binding.

It belongs to the methyltransferase superfamily. Type-7 methyltransferase family. Mg(2+) is required as a cofactor.

The enzyme catalyses 7-methylxanthine + S-adenosyl-L-methionine = theobromine + S-adenosyl-L-homocysteine + H(+). It functions in the pathway alkaloid biosynthesis. Its function is as follows. Involved in the biosynthesis of theobromine. The chain is Probable 7-methylxanthine methyltransferase 2 from Theobroma cacao (Cacao).